Reading from the N-terminus, the 233-residue chain is Orotidine 5'-phosphate decarboxylase (233 aa).

Residues Asp-13, Lys-35, 62–71 (DLKFHDIPNT), Thr-122, Arg-182, Gln-191, Gly-211, and Arg-212 each bind substrate. Catalysis depends on Lys-64, which acts as the Proton donor.

This sequence belongs to the OMP decarboxylase family. Type 1 subfamily. Homodimer.

The enzyme catalyses orotidine 5'-phosphate + H(+) = UMP + CO2. It participates in pyrimidine metabolism; UMP biosynthesis via de novo pathway; UMP from orotate: step 2/2. Functionally, catalyzes the decarboxylation of orotidine 5'-monophosphate (OMP) to uridine 5'-monophosphate (UMP). In Pseudomonas putida (strain GB-1), this protein is Orotidine 5'-phosphate decarboxylase.